We begin with the raw amino-acid sequence, 117 residues long: MIPGMGMNPKQLKQMQRAMKQMGMDMKDLRGVEEVVIKLKRKEIIIKNPKVNVMEFMGQKTYQVTGKARERSLEAEMEIPEDDIELVMNQTGASREDATRALQETGGDLAEAIMRLS.

The NAC-A/B domain maps to 9 to 77 (PKQLKQMQRA…ARERSLEAEM (69 aa)).

The protein belongs to the NAC-alpha family. In terms of assembly, homodimer. Interacts with the ribosome. Binds ribosomal RNA.

Functionally, contacts the emerging nascent chain on the ribosome. This is Nascent polypeptide-associated complex protein from Methanothermobacter thermautotrophicus (strain ATCC 29096 / DSM 1053 / JCM 10044 / NBRC 100330 / Delta H) (Methanobacterium thermoautotrophicum).